The chain runs to 265 residues: Undecaprenyl-diphosphatase 1 (265 aa).

Helical transmembrane passes span 4–24 (IIIA…PISS), 42–62 (AKTF…ILYH), 84–104 (FHVF…HDVI), 108–128 (LFQP…MILA), 184–204 (SEFS…LDLL), 217–237 (MFAV…VTFL), and 245–265 (LKPF…FVLL).

This sequence belongs to the UppP family.

Its subcellular location is the cell membrane. It catalyses the reaction di-trans,octa-cis-undecaprenyl diphosphate + H2O = di-trans,octa-cis-undecaprenyl phosphate + phosphate + H(+). Its function is as follows. Catalyzes the dephosphorylation of undecaprenyl diphosphate (UPP). Confers resistance to bacitracin. The polypeptide is Undecaprenyl-diphosphatase 1 (Bacillus cereus (strain ZK / E33L)).